The primary structure comprises 429 residues: Cell cycle protein kinase spo4 (429 aa).

One can recognise a Protein kinase domain in the interval 40–402 (YHVVKLVGAG…KAKTALQHEF (363 aa)). ATP contacts are provided by residues 46–54 (VGAGSFSSV) and K95. Residue D182 is the Proton acceptor of the active site. Phosphothreonine is present on T264.

This sequence belongs to the protein kinase superfamily. Ser/Thr protein kinase family. CDC7 subfamily. As to quaternary structure, interacts with spo6.

It localises to the nucleus. It catalyses the reaction L-seryl-[protein] + ATP = O-phospho-L-seryl-[protein] + ADP + H(+). It carries out the reaction L-threonyl-[protein] + ATP = O-phospho-L-threonyl-[protein] + ADP + H(+). Its function is as follows. Required for the initiation of meiosis II and progression through anaphase II. In Schizosaccharomyces pombe (strain 972 / ATCC 24843) (Fission yeast), this protein is Cell cycle protein kinase spo4 (spo4).